Here is a 275-residue protein sequence, read N- to C-terminus: Interleukin-2 receptor subunit alpha (275 aa).

The first 21 residues, 1–21 (MEPSLLLWGILTFVVVHGHVT), serve as a signal peptide directing secretion. The Sushi 1 domain occupies 22–84 (ELCDENPPDI…SWENQCRCIS (63 aa)). Residues 22–243 (ELCDENPPDI…ESFVFTTEYQ (222 aa)) lie on the Extracellular side of the membrane. Cystine bridges form between C24–C67, C49–C80, and C51–C82. N-linked (GlcNAc...) asparagine glycosylation is found at N60 and N70. Positions 91-118 (DGQIIPKPEEQKGKSPMGMQSQMQPTDQ) are disordered. Over residues 108-118 (GMQSQMQPTDQ) the composition is skewed to polar residues. The Sushi 2 domain maps to 123–186 (GHCREPPPWE…WTQPRLQCLS (64 aa)). Intrachain disulfides connect C125/C168 and C152/C184. The segment at 188–213 (RSDGWFPDDEEPQASTDAALGSDTSC) is disordered. A helical membrane pass occupies residues 244 to 262 (IAVAGCVLLLISIVLLSGL). Over 263–275 (TWQRRWRKSRRTI) the chain is Cytoplasmic.

As to quaternary structure, non-covalent dimer of an alpha and a beta subunit. IL2R exists in 3 different forms: a high affinity dimer, an intermediate affinity monomer (beta subunit), and a low affinity monomer (alpha subunit). The high and intermediate affinity forms also associate with a gamma subunit.

It is found in the membrane. In terms of biological role, receptor for interleukin-2. The receptor is involved in the regulation of immune tolerance by controlling regulatory T cells (TREGs) activity. TREGs suppress the activation and expansion of autoreactive T-cells. In Felis catus (Cat), this protein is Interleukin-2 receptor subunit alpha (IL2RA).